A 179-amino-acid polypeptide reads, in one-letter code: Peptide deformylase (179 aa).

2 residues coordinate Fe cation: C102 and H144. Residue E145 is part of the active site. H148 is a binding site for Fe cation.

Belongs to the polypeptide deformylase family. The cofactor is Fe(2+).

The catalysed reaction is N-terminal N-formyl-L-methionyl-[peptide] + H2O = N-terminal L-methionyl-[peptide] + formate. In terms of biological role, removes the formyl group from the N-terminal Met of newly synthesized proteins. Requires at least a dipeptide for an efficient rate of reaction. N-terminal L-methionine is a prerequisite for activity but the enzyme has broad specificity at other positions. The protein is Peptide deformylase of Wolbachia pipientis wMel.